The primary structure comprises 440 residues: Stromal membrane-associated protein 1 (440 aa).

Residues 18–143 form the Arf-GAP domain; the sequence is QLILSKLLRE…IAITNKEKEK (126 aa). The C4-type zinc-finger motif lies at 33–56; sequence CADCEAKGPRWASWNIGVFICIRC. Basic and acidic residues-rich tracts occupy residues 140–158 and 165–178; these read EKEK…EKPA and KLPK…EPKK. Disordered regions lie at residues 140–211 and 410–440; these read EKEK…PATA and NASA…QLWK. An Interaction with clathrin heavy chains motif is present at residues 192–196; the sequence is LLGLD. Residues 420 to 440 show a composition bias toward low complexity; it reads STTAGWSGSSSGQTLSTQLWK.

Interacts with ARF6. Interacts with clathrin heavy chains via the clathrin box-like motif. In terms of tissue distribution, detected in adult brain, lung, heart, liver, ovary and bone marrow. Detected in stromal cells of the red pulp of adult spleen.

The protein localises to the cell membrane. GTPase activating protein that acts on ARF6. Plays a role in clathrin-dependent endocytosis. May play a role in erythropoiesis. The sequence is that of Stromal membrane-associated protein 1 (Smap1) from Mus musculus (Mouse).